The sequence spans 370 residues: tRNA-specific 2-thiouridylase MnmA (370 aa).

ATP contacts are provided by residues 19–26 (AMSGGVDS) and leucine 45. Cysteine 113 (nucleophile) is an active-site residue. Cysteines 113 and 209 form a disulfide. Glycine 137 lines the ATP pocket. An interaction with tRNA region spans residues 159–161 (RDQ). Residue cysteine 209 is the Cysteine persulfide intermediate of the active site.

This sequence belongs to the MnmA/TRMU family.

The protein resides in the cytoplasm. It catalyses the reaction S-sulfanyl-L-cysteinyl-[protein] + uridine(34) in tRNA + AH2 + ATP = 2-thiouridine(34) in tRNA + L-cysteinyl-[protein] + A + AMP + diphosphate + H(+). Its function is as follows. Catalyzes the 2-thiolation of uridine at the wobble position (U34) of tRNA, leading to the formation of s(2)U34. This Zymomonas mobilis subsp. mobilis (strain ATCC 31821 / ZM4 / CP4) protein is tRNA-specific 2-thiouridylase MnmA.